A 162-amino-acid polypeptide reads, in one-letter code: RNA pyrophosphohydrolase (162 aa).

Residues 11-155 (PYRPCVGIVL…KRAVYEEVVA (145 aa)) form the Nudix hydrolase domain. Positions 45–66 (GGIDEGEKPREAALRELWEETG) match the Nudix box motif.

The protein belongs to the Nudix hydrolase family. RppH subfamily. The cofactor is a divalent metal cation.

In terms of biological role, accelerates the degradation of transcripts by removing pyrophosphate from the 5'-end of triphosphorylated RNA, leading to a more labile monophosphorylated state that can stimulate subsequent ribonuclease cleavage. In Cereibacter sphaeroides (strain ATCC 17023 / DSM 158 / JCM 6121 / CCUG 31486 / LMG 2827 / NBRC 12203 / NCIMB 8253 / ATH 2.4.1.) (Rhodobacter sphaeroides), this protein is RNA pyrophosphohydrolase.